We begin with the raw amino-acid sequence, 383 residues long: Cytochrome b (383 aa).

A run of 4 helical transmembrane segments spans residues 35–55 (FGSI…ILSM), 79–100 (WLFR…YIHI), 115–135 (WGIG…GYVL), and 180–200 (FFSL…LHLF). Histidine 85 and histidine 99 together coordinate heme b. Residues histidine 184 and histidine 198 each coordinate heme b. Histidine 203 serves as a coordination point for a ubiquinone. The next 4 membrane-spanning stretches (helical) occupy residues 228–248 (IKDL…NFQF), 290–310 (LGGV…IFYN), 321–341 (LNKI…WLGK), and 348–368 (FTNI…LNFY).

The protein belongs to the cytochrome b family. As to quaternary structure, the main subunits of complex b-c1 are: cytochrome b, cytochrome c1 and the Rieske protein. The cofactor is heme b.

Its subcellular location is the mitochondrion inner membrane. Component of the ubiquinol-cytochrome c reductase complex (complex III or cytochrome b-c1 complex) that is part of the mitochondrial respiratory chain. The b-c1 complex mediates electron transfer from ubiquinol to cytochrome c. Contributes to the generation of a proton gradient across the mitochondrial membrane that is then used for ATP synthesis. The sequence is that of Cytochrome b (MT-CYB) from Apis mellifera ligustica (Common honeybee).